The primary structure comprises 767 residues: Protein hunchback (767 aa).

Disordered stretches follow at residues 30 to 51, 105 to 127, and 174 to 212; these read EPGH…PIPS, QQQY…HLMG, and EKLQ…SNSS. Over residues 39-51 the composition is skewed to polar residues; that stretch reads SVASSPRQSPIPS. Over residues 105 to 117 the composition is skewed to low complexity; it reads QQQYQQHFQAAQQ. Residues 200 to 212 are compositionally biased toward basic and acidic residues; sequence EPEKEHDQMSNSS. C2H2-type zinc fingers lie at residues 242–264, 271–293, 299–321, and 327–351; these read YKCK…TRTH, LQCP…IRKH, FQCD…RKSH, and YRCA…KYGH. Disordered regions lie at residues 357–424, 518–570, and 610–704; these read LDED…TSQL, QLQQ…QPQQ, and GVMT…APPS. A compositionally biased stretch (gly residues) spans 386-397; sequence IASGGSGSGSGS. The span at 518 to 527 shows a compositional bias: low complexity; it reads QLQQQNQQQS. A compositionally biased stretch (acidic residues) spans 528–537; that stretch reads DNEEEEQDDE. Residues 661 to 704 are compositionally biased toward low complexity; the sequence is ANTSASSTASSSGNSSNASSNSNGNSSSNSSSSGTNSAAAAPPS. 2 consecutive C2H2-type zinc fingers follow at residues 714–736 and 742–766; these read YECK…MGYH and FKCN…RNAH.

It belongs to the hunchback C2H2-type zinc-finger protein family.

The protein localises to the nucleus. Functionally, gap class segmentation protein that controls development of head structures. The chain is Protein hunchback (hb) from Drosophila orena (Fruit fly).